A 577-amino-acid polypeptide reads, in one-letter code: Acyl-coenzyme A synthetase ACSM2B, mitochondrial (577 aa).

Residues 1–46 (MHWLRKVQGLCTLWGTQMSSRTLYINSRQLVSLQWGHQEVPAKFNF) constitute a mitochondrion transit peptide. Residue glutamine 139 coordinates CoA. ATP contacts are provided by residues 221 to 229 (TSGTSGLPK), 359 to 364 (EFYGQT), aspartate 446, and arginine 461. Position 364 (threonine 364) interacts with substrate. CoA is bound at residue 469-471 (SGY). Residue arginine 472 coordinates substrate. Arginine 501 is a binding site for CoA. A Phosphoserine modification is found at serine 513. CoA contacts are provided by residues lysine 532 and 540–542 (YPR). Lysine 557 lines the ATP pocket.

This sequence belongs to the ATP-dependent AMP-binding enzyme family. In terms of assembly, monomer. Requires Mg(2+) as cofactor. The cofactor is Mn(2+). As to expression, detected in liver.

It is found in the mitochondrion. It carries out the reaction a medium-chain fatty acid + ATP + CoA = a medium-chain fatty acyl-CoA + AMP + diphosphate. The catalysed reaction is benzoate + ATP + CoA = benzoyl-CoA + AMP + diphosphate. The enzyme catalyses hexanoate + ATP + CoA = hexanoyl-CoA + AMP + diphosphate. It catalyses the reaction butanoate + ATP + CoA = butanoyl-CoA + AMP + diphosphate. It carries out the reaction octanoate + ATP + CoA = octanoyl-CoA + AMP + diphosphate. The catalysed reaction is decanoate + ATP + CoA = decanoyl-CoA + AMP + diphosphate. With respect to regulation, activated by monovalent cations, such as potassium, rubidium or ammonium. Its function is as follows. Catalyzes the activation of fatty acids by CoA to produce an acyl-CoA, the first step in fatty acid metabolism. Capable of activating medium-chain fatty acids (e.g. butyric (C4) to decanoic (C10) acids), and certain carboxylate-containing xenobiotics, e.g. benzoate. This is Acyl-coenzyme A synthetase ACSM2B, mitochondrial (ACSM2B) from Homo sapiens (Human).